Consider the following 475-residue polypeptide: ATP-dependent rRNA helicase RRP3 (475 aa).

The interval 30-59 is disordered; it reads ALKQKKQAPVTEKPEEIVETTSEASQDVNS. Residues 48 to 59 show a composition bias toward polar residues; sequence ETTSEASQDVNS. Positions 64 to 92 match the Q motif motif; it reads HTFSELNLVPELMEAIEKLKYTKPTPIQS. Residues 95 to 266 enclose the Helicase ATP-binding domain; the sequence is IPHALEGKDI…RASLHEPVKV (172 aa). Position 108 to 115 (108 to 115) interacts with ATP; the sequence is AQTGSGKT. A DEAD box motif is present at residues 214 to 217; it reads DEAD. Positions 293–437 constitute a Helicase C-terminal domain; sequence FLIHLLNEFM…KDPSPPRDVL (145 aa). A disordered region spans residues 451–475; sequence AIKQTKDFHEKRTKKKRDDRDREER.

It belongs to the DEAD box helicase family. DDX47/RRP3 subfamily.

The protein resides in the nucleus. Functionally, required for pre-ribosomal RNA processing. Involved in the maturation of the 35S-pre-rRNA and to its cleavage to mature 18S rRNA. The protein is ATP-dependent rRNA helicase RRP3 (RRP3) of Meyerozyma guilliermondii (strain ATCC 6260 / CBS 566 / DSM 6381 / JCM 1539 / NBRC 10279 / NRRL Y-324) (Yeast).